A 225-amino-acid chain; its full sequence is Glycerol-3-phosphate acyltransferase (225 aa).

6 helical membrane-spanning segments follow: residues 6-26, 55-75, 95-115, 135-155, 160-180, and 187-207; these read FFFF…LIIG, WGIV…IICL, DIAI…SIFN, PFIG…VGYA, IMAT…PGIT, and ILYF…HSNI.

The protein belongs to the PlsY family. Probably interacts with PlsX.

It localises to the cell membrane. The enzyme catalyses an acyl phosphate + sn-glycerol 3-phosphate = a 1-acyl-sn-glycero-3-phosphate + phosphate. Its pathway is lipid metabolism; phospholipid metabolism. Its function is as follows. Catalyzes the transfer of an acyl group from acyl-phosphate (acyl-PO(4)) to glycerol-3-phosphate (G3P) to form lysophosphatidic acid (LPA). This enzyme utilizes acyl-phosphate as fatty acyl donor, but not acyl-CoA or acyl-ACP. The polypeptide is Glycerol-3-phosphate acyltransferase (Phytoplasma australiense).